Here is a 386-residue protein sequence, read N- to C-terminus: ATP synthase subunit a (386 aa).

Helical transmembrane passes span 150 to 170 (FTNEVLYMLLTVVLVVFLFFV), 243 to 263 (HFLITLALSFSIFIGITIVGF), 270 to 290 (FFSFLLPAGVPLPLAPFLVLL), and 310 to 330 (MMAGHSLVKILSGFAWTMLFL).

It belongs to the ATPase A chain family. In terms of assembly, F-type ATPases have 2 components, CF(1) - the catalytic core - and CF(0) - the membrane proton channel. CF(1) has five subunits: alpha(3), beta(3), gamma(1), delta(1), epsilon(1). CF(0) has three main subunits: a, b and c.

It is found in the mitochondrion inner membrane. In terms of biological role, mitochondrial membrane ATP synthase (F(1)F(0) ATP synthase or Complex V) produces ATP from ADP in the presence of a proton gradient across the membrane which is generated by electron transport complexes of the respiratory chain. F-type ATPases consist of two structural domains, F(1) - containing the extramembraneous catalytic core and F(0) - containing the membrane proton channel, linked together by a central stalk and a peripheral stalk. During catalysis, ATP synthesis in the catalytic domain of F(1) is coupled via a rotary mechanism of the central stalk subunits to proton translocation. Key component of the proton channel; it may play a direct role in the translocation of protons across the membrane. The polypeptide is ATP synthase subunit a (ATP6) (Triticum aestivum (Wheat)).